We begin with the raw amino-acid sequence, 326 residues long: Septum site-determining protein minD homolog, chloroplastic (326 aa).

A chloroplast-targeting transit peptide spans 1-62; that stretch reads MASLRLFSTN…LAGETPRIVV (62 aa). 67–74 lines the ATP pocket; that stretch reads KGGVGKTT.

It belongs to the ParA family. MinD subfamily. Homodimer. Interacts with MINE1. Binds to ARC3. Interacts with MCD1. Interacts with CDP1/PARC6.

It is found in the plastid. The protein localises to the chloroplast inner membrane. Its activity is regulated as follows. Stimulated ATPase activity by MINE1. Functionally, together with ARC3 and MCD1, regulates FtsZ ring positioning in chloroplasts in an ARC6-dependent manner. Calcium-dependent ATPase required for the correct placement of the plastid division site. Inhibits FtsZ filament and ring formation in the plastid. Mediates inhibition of plastid division. In cooperation with MINE1, prevents FtsZ ring formation anywhere outside of the mid-plastids. In Arabidopsis thaliana (Mouse-ear cress), this protein is Septum site-determining protein minD homolog, chloroplastic.